Consider the following 181-residue polypeptide: MILALAMSTDAFAAAVGKGTALRNPRLSEALRTGIIFGVIEGLTPLVGWALGSIAADSVADWDHWIAFTLLLILGLLMIRAGLRAEEPEATPAIRHSFWLLAATGFATSIDAMAVGVSLAFIDNNILITAAAIGLATFLMVTLGVMVGRLIGNVAGKWAEILGGLALMGVGTVILYEHLTM.

The next 5 helical transmembrane spans lie at 35-55 (IIFG…GSIA), 59-79 (VADW…LLMI), 102-122 (AATG…LAFI), 126-146 (ILIT…LGVM), and 161-181 (ILGG…HLTM).

The protein belongs to the MntP (TC 9.B.29) family.

The protein resides in the cell inner membrane. In terms of biological role, probably functions as a manganese efflux pump. The chain is Putative manganese efflux pump MntP from Nitrosomonas eutropha (strain DSM 101675 / C91 / Nm57).